The sequence spans 210 residues: Calcium-activated potassium channel subunit beta-4 (210 aa).

At 1 to 19 the chain is on the cytoplasmic side; it reads MAKLRVAYEYTEAEDKSIR. The helical transmembrane segment at 20-40 threads the bilayer; the sequence is LGLFLIISGVVSLFIFGFCWL. Residues 41–167 are Extracellular-facing; that stretch reads SPALQDLQAT…DVLLHRTHDE (127 aa). Asn-53 and Asn-90 each carry an N-linked (GlcNAc...) asparagine glycan. Residues 168-188 traverse the membrane as a helical segment; the sequence is IVLLHCFLWPLVTFVVGVLIV. The Cytoplasmic portion of the chain corresponds to 189–210; that stretch reads VLTICAKSLAVKAEAMKKRKFS.

Belongs to the KCNMB (TC 8.A.14.1) family. KCNMB4 subfamily. As to quaternary structure, interacts with KCNMA1 tetramer. There are probably 4 molecules of KCMNB4 per KCNMA1 tetramer. Interacts with FMR1 (via N-terminus). Phosphorylated. Phosphorylation modulates its effect on KCNMA1 activation kinetics. Post-translationally, N-glycosylated. A highly glycosylated form is promoted by KCNMA1. Glycosylation, which is not required for the interaction with KCNMA1 and subcellular location, increases protection against charybdotoxin. In terms of tissue distribution, predominantly expressed in brain. In brain, it is expressed in the cerebellum, cerebral cortex, medulla, spinal cord, occipital pole, frontal lobe, temporal lobe, putamen, amygdala, caudate nucleus, corpus callosum, hippocampus, substantia nigra and thalamus. Weakly or not expressed in other tissues.

Its subcellular location is the membrane. Its function is as follows. Regulatory subunit of the calcium activated potassium KCNMA1 (maxiK) channel. Modulates the calcium sensitivity and gating kinetics of KCNMA1, thereby contributing to KCNMA1 channel diversity. Decreases the gating kinetics and calcium sensitivity of the KCNMA1 channel, but with fast deactivation kinetics. May decrease KCNMA1 channel openings at low calcium concentrations but increases channel openings at high calcium concentrations. Makes KCNMA1 channel resistant to 100 nM charybdotoxin (CTX) toxin concentrations. The sequence is that of Calcium-activated potassium channel subunit beta-4 (KCNMB4) from Homo sapiens (Human).